The chain runs to 33 residues: Dermaseptin DS VIII-like peptide (33 aa).

An Alanine amide modification is found at Ala-33.

In terms of tissue distribution, expressed by the parotoid glands.

The protein resides in the secreted. Its function is as follows. Possesses a potent antimicrobial activity against bacteria, fungi and protozoa. Probably acts by disturbing membrane functions with its amphipathic structure. The sequence is that of Dermaseptin DS VIII-like peptide from Phyllomedusa burmeisteri (Brazilian common walking leaf frog).